The sequence spans 960 residues: Semaphorin-6C (960 aa).

Residues 1-23 form the signal peptide; that stretch reads MPRAPHSMPLLLLLLLSLPQAQT. Topologically, residues 24-635 are extracellular; the sequence is AFPQDPIPLL…ASASRSIPIP (612 aa). A Sema domain is found at 29–515; the sequence is PIPLLTSDLQ…FPGCIVYLSL (487 aa). Asparagine 69 is a glycosylation site (N-linked (GlcNAc...) asparagine). Intrachain disulfides connect cysteine 110–cysteine 120, cysteine 138–cysteine 147, cysteine 261–cysteine 372, and cysteine 286–cysteine 331. N-linked (GlcNAc...) asparagine glycosylation occurs at asparagine 285. Asparagine 436 carries an N-linked (GlcNAc...) asparagine glycan. 4 cysteine pairs are disulfide-bonded: cysteine 478–cysteine 509, cysteine 518–cysteine 536, cysteine 524–cysteine 569, and cysteine 528–cysteine 544. Residues 555-624 are disordered; it reads VDLTGNQESM…HTQGVRRDLS (70 aa). A helical membrane pass occupies residues 636 to 656; that stretch reads LLLACVAAAFALGASVSGLLV. Topologically, residues 657 to 960 are cytoplasmic; the sequence is SCACRRANRR…PAPHGSHFNF (304 aa). 3 disordered regions span residues 685 to 725, 745 to 792, and 806 to 960; these read LARL…SPPE, ASGG…PGQE, and HGPQ…HFNF. The span at 899 to 909 shows a compositional bias: low complexity; it reads RVPSGGPSRYS. The segment covering 922–935 has biased composition (basic and acidic residues); sequence PDGHRGRSLKRVDV. The segment covering 940 to 952 has biased composition (pro residues); the sequence is SPKPPLATPPQPA.

The protein belongs to the semaphorin family. As to expression, expressed in many regions of the developing nervous system, probably in neurons and their precursors, but also in nonneural tissue such as immature muscle and dermis. In adult, strong expression in the skeletal muscle and moderate expression in the brain, where cerebellum shows the highest expression. Also expressed in almost all areas of the CNS.

The protein resides in the cell membrane. Functionally, shows growth cone collapsing activity on dorsal root ganglion (DRG) neurons in vitro. May be a stop signal for the DRG neurons in their target areas, and possibly also for other neurons. May also be involved in the maintenance and remodeling of neuronal connections. In Rattus norvegicus (Rat), this protein is Semaphorin-6C (Sema6c).